A 413-amino-acid polypeptide reads, in one-letter code: Multidrug resistance protein MdtA (413 aa).

Residues 1–20 (MKGSNTFRWAIAIGVVVAAA) form the signal peptide. 2 disordered regions span residues 31 to 57 (SPTAAPGVAAQAQHTAAAGRRGMRDGP) and 391 to 413 (EPQTTMADEKSPSRHEGQKGARA). A compositionally biased stretch (low complexity) spans 32 to 49 (PTAAPGVAAQAQHTAAAG). The segment covering 397–413 (ADEKSPSRHEGQKGARA) has biased composition (basic and acidic residues).

Belongs to the membrane fusion protein (MFP) (TC 8.A.1) family. Part of a tripartite efflux system composed of MdtA, MdtB and MdtC.

The protein resides in the cell inner membrane. The sequence is that of Multidrug resistance protein MdtA from Salmonella typhi.